Reading from the N-terminus, the 171-residue chain is uncharacterized protein (171 aa).

This is an uncharacterized protein from Encephalitozoon cuniculi (strain GB-M1) (Microsporidian parasite).